A 261-amino-acid polypeptide reads, in one-letter code: Cytochrome c oxidase subunit 3 (261 aa).

The Mitochondrial matrix portion of the chain corresponds to 1–15 (MTHQTHAYHMVNPSP). The chain crosses the membrane as a helical span at residues 16–34 (WPLTGALSALLMTSGLAMW). Residues 35–40 (FHFNST) are Mitochondrial intermembrane-facing. A helical membrane pass occupies residues 41–66 (LLLAMGLLTNILTMYQWWRDIIREST). Over 67 to 72 (FQGHHT) the chain is Mitochondrial matrix. The helical transmembrane segment at 73-105 (SIVQKGLRYGMILFIISEVFFFSGFFWAFYHSS) threads the bilayer. Over 106–128 (LAPTPELGGCWPPTGIHPLNPLE) the chain is Mitochondrial intermembrane. Residues 129–152 (VPLLNTSVLLASGVSITWAHHSLM) traverse the membrane as a helical segment. The Mitochondrial matrix portion of the chain corresponds to 153–155 (EGN). A helical transmembrane segment spans residues 156-183 (RKNMLQGLFITISLGVYFTLLQASEYYE). The Mitochondrial intermembrane portion of the chain corresponds to 184-190 (ASFTISD). A helical transmembrane segment spans residues 191–223 (GVYGSTFFVATGFHGLHVIIGSTFLIVCFLRQL). Residues 224–232 (KFHFTSSHH) lie on the Mitochondrial matrix side of the membrane. Residues 233-256 (FGFEAAAWYWHFVDVVWLFLYVSI) traverse the membrane as a helical segment. At 257-261 (YWWGS) the chain is on the mitochondrial intermembrane side.

This sequence belongs to the cytochrome c oxidase subunit 3 family. Component of the cytochrome c oxidase (complex IV, CIV), a multisubunit enzyme composed of 14 subunits. The complex is composed of a catalytic core of 3 subunits MT-CO1, MT-CO2 and MT-CO3, encoded in the mitochondrial DNA, and 11 supernumerary subunits COX4I, COX5A, COX5B, COX6A, COX6B, COX6C, COX7A, COX7B, COX7C, COX8 and NDUFA4, which are encoded in the nuclear genome. The complex exists as a monomer or a dimer and forms supercomplexes (SCs) in the inner mitochondrial membrane with NADH-ubiquinone oxidoreductase (complex I, CI) and ubiquinol-cytochrome c oxidoreductase (cytochrome b-c1 complex, complex III, CIII), resulting in different assemblies (supercomplex SCI(1)III(2)IV(1) and megacomplex MCI(2)III(2)IV(2)).

The protein localises to the mitochondrion inner membrane. The catalysed reaction is 4 Fe(II)-[cytochrome c] + O2 + 8 H(+)(in) = 4 Fe(III)-[cytochrome c] + 2 H2O + 4 H(+)(out). Its function is as follows. Component of the cytochrome c oxidase, the last enzyme in the mitochondrial electron transport chain which drives oxidative phosphorylation. The respiratory chain contains 3 multisubunit complexes succinate dehydrogenase (complex II, CII), ubiquinol-cytochrome c oxidoreductase (cytochrome b-c1 complex, complex III, CIII) and cytochrome c oxidase (complex IV, CIV), that cooperate to transfer electrons derived from NADH and succinate to molecular oxygen, creating an electrochemical gradient over the inner membrane that drives transmembrane transport and the ATP synthase. Cytochrome c oxidase is the component of the respiratory chain that catalyzes the reduction of oxygen to water. Electrons originating from reduced cytochrome c in the intermembrane space (IMS) are transferred via the dinuclear copper A center (CU(A)) of subunit 2 and heme A of subunit 1 to the active site in subunit 1, a binuclear center (BNC) formed by heme A3 and copper B (CU(B)). The BNC reduces molecular oxygen to 2 water molecules using 4 electrons from cytochrome c in the IMS and 4 protons from the mitochondrial matrix. This Equus caballus (Horse) protein is Cytochrome c oxidase subunit 3 (MT-CO3).